We begin with the raw amino-acid sequence, 372 residues long: MAEKLHISVLCGGQSTEHEISIQSAKNIVNTLDAAKYLISLIFIDHVGRWYLIDQPEMFLAHSPDHLVKEGSARPITIAFGDAAKPWQSLNGDGRRYSADCVFPMVHGTQGEDGALQGLLELLNLPYVGANVQSSAVCMEKDLTKTVLRAGGIPVVDWHTLSPRDATEGVYQRLLDRWGTSELFVKAVSLGSSVATLPVKTETEFTKAVKEVFRYDDRLMVEPRIRGREIECAVLGNGAPKASLPGEIIPHHDYYSYDAKYLDPNGATTTTSVDLSESVTKQIQQIAIDAFKMVHCSGMARVDFFVTPNNKVLVNEINTIPGFTNISMYPKMWEASGLPCPNLLDQLIELAIDRHQEQQKLIRCYEVKARSL.

Positions 145 to 349 (KTVLRAGGIP…CPNLLDQLIE (205 aa)) constitute an ATP-grasp domain. 176 to 231 (DRWGTSELFVKAVSLGSSVATLPVKTETEFTKAVKEVFRYDDRLMVEPRIRGREIE) is an ATP binding site. Mg(2+)-binding residues include aspartate 303, glutamate 316, and asparagine 318.

Belongs to the D-alanine--D-alanine ligase family. It depends on Mg(2+) as a cofactor. The cofactor is Mn(2+).

It is found in the cytoplasm. It catalyses the reaction 2 D-alanine + ATP = D-alanyl-D-alanine + ADP + phosphate + H(+). It participates in cell wall biogenesis; peptidoglycan biosynthesis. Cell wall formation. The chain is D-alanine--D-alanine ligase from Coxiella burnetii (strain CbuK_Q154) (Coxiella burnetii (strain Q154)).